The primary structure comprises 381 residues: Metallophosphoesterase 1 (381 aa).

The chain crosses the membrane as a helical span at residues 15–35 (LIFAFVSVFVFCEYVIYYLVI). A divalent metal cation contacts are provided by Asp59, Asp101, Asn139, His234, His288, and His290. The helical transmembrane segment at 341 to 361 (TVLVVYCSSCLIIALITLIHL) threads the bilayer. The Di-lysine motif motif lies at 377–381 (KHKTL).

This sequence belongs to the metallophosphoesterase superfamily. MPPE1 family. The cofactor is Mn(2+).

It is found in the endoplasmic reticulum-Golgi intermediate compartment membrane. Its function is as follows. Metallophosphoesterase that catalyzes the removal of a side-chain ethanolamine-phosphate (EtNP) from the second mannose of the GPI-anchor protein intermediate. Participates in the glycan remodeling steps of GPI-anchor maturation to allow an efficient transport of GPI-anchor proteins from the endoplasmic reticulum to the Golgi. This Danio rerio (Zebrafish) protein is Metallophosphoesterase 1.